We begin with the raw amino-acid sequence, 147 residues long: Hemoglobin subunit epsilon (147 aa).

The 145-residue stretch at 3–147 (HWSAEEKQLI…VAHALPRKYH (145 aa)) folds into the Globin domain. Heme b-binding residues include His-64 and His-93.

The protein belongs to the globin family. In terms of assembly, heterotetramer of two epsilon chains and two alpha chains. As to expression, red blood cells.

In terms of biological role, beta-type chain found in early embryos. This chain is Hemoglobin subunit epsilon (HBE), found in Cairina moschata (Muscovy duck).